Reading from the N-terminus, the 610-residue chain is Glutamine--fructose-6-phosphate aminotransferase [isomerizing] (610 aa).

The Nucleophile; for GATase activity role is filled by C2. A Glutamine amidotransferase type-2 domain is found at 2–219 (CGIVGYAGKK…SGEWGYFSQN (218 aa)). SIS domains lie at 287–431 (SKDV…SDEE) and 459–600 (MSSH…PDQP). Catalysis depends on K605, which acts as the For Fru-6P isomerization activity.

In terms of assembly, homodimer.

The protein resides in the cytoplasm. The catalysed reaction is D-fructose 6-phosphate + L-glutamine = D-glucosamine 6-phosphate + L-glutamate. Functionally, catalyzes the first step in hexosamine metabolism, converting fructose-6P into glucosamine-6P using glutamine as a nitrogen source. The chain is Glutamine--fructose-6-phosphate aminotransferase [isomerizing] from Leptospira interrogans serogroup Icterohaemorrhagiae serovar copenhageni (strain Fiocruz L1-130).